The following is a 591-amino-acid chain: Indole-3-acetic acid-amido synthetase GH3.10 (591 aa).

The protein belongs to the IAA-amido conjugating enzyme family. In terms of tissue distribution, expressed in cotyledons and hypocotyls.

Functionally, catalyzes the synthesis of indole-3-acetic acid (IAA)-amino acid conjugates, providing a mechanism for the plant to cope with the presence of excess auxin. Involved in red light-specific hypocotyl elongation. May act downstream of a red light signal transduction and determine the degree of hypocotyl elongation. This chain is Indole-3-acetic acid-amido synthetase GH3.10, found in Arabidopsis thaliana (Mouse-ear cress).